The primary structure comprises 531 residues: Apolipoprotein N-acyltransferase (531 aa).

Transmembrane regions (helical) follow at residues 8–28, 34–54, 74–94, 105–125, 128–148, 178–198, and 206–226; these read IILL…LLAM, FGIF…IDGV, WSFG…AFLV, LAVV…VLVA, LWSD…VAEW, VLNV…PALI, and VGLA…YYRL. Residues 243-493 enclose the CN hydrolase domain; it reads VQPVIDQAKK…KGVTDAILPG (251 aa). Glu-287 serves as the catalytic Proton acceptor. Lys-351 is a catalytic residue. Cys-405 functions as the Nucleophile in the catalytic mechanism. Residues 501 to 521 traverse the membrane as a helical segment; it reads SMLRGRIFWFTGVFLLLVAAI.

It belongs to the CN hydrolase family. Apolipoprotein N-acyltransferase subfamily.

The protein localises to the cell inner membrane. It carries out the reaction N-terminal S-1,2-diacyl-sn-glyceryl-L-cysteinyl-[lipoprotein] + a glycerophospholipid = N-acyl-S-1,2-diacyl-sn-glyceryl-L-cysteinyl-[lipoprotein] + a 2-acyl-sn-glycero-3-phospholipid + H(+). It participates in protein modification; lipoprotein biosynthesis (N-acyl transfer). Functionally, catalyzes the phospholipid dependent N-acylation of the N-terminal cysteine of apolipoprotein, the last step in lipoprotein maturation. The polypeptide is Apolipoprotein N-acyltransferase (Sinorhizobium fredii (strain NBRC 101917 / NGR234)).